The sequence spans 360 residues: Glutamate 5-kinase (360 aa).

Lys-11 contributes to the ATP binding site. 3 residues coordinate substrate: Ser-51, Asp-138, and Asn-150. Residues Lys-278–Tyr-356 enclose the PUA domain.

This sequence belongs to the glutamate 5-kinase family.

Its subcellular location is the cytoplasm. The catalysed reaction is L-glutamate + ATP = L-glutamyl 5-phosphate + ADP. It functions in the pathway amino-acid biosynthesis; L-proline biosynthesis; L-glutamate 5-semialdehyde from L-glutamate: step 1/2. Its function is as follows. Catalyzes the transfer of a phosphate group to glutamate to form L-glutamate 5-phosphate. This Bacteroides thetaiotaomicron (strain ATCC 29148 / DSM 2079 / JCM 5827 / CCUG 10774 / NCTC 10582 / VPI-5482 / E50) protein is Glutamate 5-kinase.